The primary structure comprises 161 residues: Myosin regulatory light chain A, smooth adductor muscle (161 aa).

Ala-1 carries the post-translational modification Blocked amino end (Ala). EF-hand domains follow at residues 20 to 55 (KLMQ…LGRT) and 89 to 124 (DTEE…MGDN). Residues Asp-33, Asn-35, Asp-37, and Asp-44 each coordinate Ca(2+).

Its function is as follows. In molluscan muscle, calcium regulation is associated with myosin rather than with actin. Muscle myosin contains two types of light chains: the catalytic light chain, essential for ATPase activity, and the regulatory light chain, a calcium-binding protein responsible for Ca(2+) dependent binding and Ca(2+) dependent Mg-ATPase activity. This is Myosin regulatory light chain A, smooth adductor muscle from Mizuhopecten yessoensis (Japanese scallop).